A 214-amino-acid polypeptide reads, in one-letter code: Adenylate kinase (214 aa).

10–15 contacts ATP; sequence GAGKGT. Residues 30 to 59 form an NMP region; that stretch reads STGDMLRAAIKAGTELGKQAKSVIDAGQLV. AMP contacts are provided by residues threonine 31, arginine 36, 57–59, 85–88, and glutamine 92; these read QLV and GFPR. Positions 122 to 159 are LID; the sequence is GRRAHLPSGRTYHVVYNPPKEEGKDDETGEPLVIREDD. Residues arginine 123 and 132 to 133 each bind ATP; that span reads TY. AMP-binding residues include arginine 156 and arginine 167. Residue lysine 200 participates in ATP binding.

Belongs to the adenylate kinase family. Monomer.

It localises to the cytoplasm. It catalyses the reaction AMP + ATP = 2 ADP. Its pathway is purine metabolism; AMP biosynthesis via salvage pathway; AMP from ADP: step 1/1. Functionally, catalyzes the reversible transfer of the terminal phosphate group between ATP and AMP. Plays an important role in cellular energy homeostasis and in adenine nucleotide metabolism. This chain is Adenylate kinase, found in Aliivibrio fischeri (strain ATCC 700601 / ES114) (Vibrio fischeri).